Here is a 410-residue protein sequence, read N- to C-terminus: MKDTVSQPAGGRGATAPRPADAASPSCGSSPSADSLSVVLAGGGTAGHVEPAMAVADALVALDPRVRITALGTPRGLETRLVPQRGYHLELITAVPMPRKPGGDLARLPSRVWRAVREARDVLDDVDADVVVGFGGYVALPAYLAARGLPLPPRRRRRIPVVIHEANARAGLANRVGAHTADRVLSAVPDSGLRRAEVVGVPVRASIAALDRAVLRAEARAHFGFPDDARVLLVFGGSQGAVSLNRAVSGAAADLAAAGVCVLHAHGPQNVLELRRRAQGDPPYVAVPYLDRMELAYAAADLVICRAGAMTVAEVSAVGLPAIYVPLPIGNGEQRLNALPVVNAGGGMVVADAALTPELVARQVAGLLTDPARLAAMTAAAARVGHRDAAGQVARAALAVATGAGARTTT.

The tract at residues 1–34 (MKDTVSQPAGGRGATAPRPADAASPSCGSSPSAD) is disordered. The span at 14 to 34 (ATAPRPADAASPSCGSSPSAD) shows a compositional bias: low complexity. UDP-N-acetyl-alpha-D-glucosamine is bound by residues 45 to 47 (TAG), Asn-167, Arg-204, Ser-238, and Gln-334.

The protein belongs to the glycosyltransferase 28 family. MurG subfamily.

It localises to the cell membrane. The enzyme catalyses di-trans,octa-cis-undecaprenyl diphospho-N-acetyl-alpha-D-muramoyl-L-alanyl-D-glutamyl-meso-2,6-diaminopimeloyl-D-alanyl-D-alanine + UDP-N-acetyl-alpha-D-glucosamine = di-trans,octa-cis-undecaprenyl diphospho-[N-acetyl-alpha-D-glucosaminyl-(1-&gt;4)]-N-acetyl-alpha-D-muramoyl-L-alanyl-D-glutamyl-meso-2,6-diaminopimeloyl-D-alanyl-D-alanine + UDP + H(+). The protein operates within cell wall biogenesis; peptidoglycan biosynthesis. Its function is as follows. Cell wall formation. Catalyzes the transfer of a GlcNAc subunit on undecaprenyl-pyrophosphoryl-MurNAc-pentapeptide (lipid intermediate I) to form undecaprenyl-pyrophosphoryl-MurNAc-(pentapeptide)GlcNAc (lipid intermediate II). This Mycobacterium bovis (strain ATCC BAA-935 / AF2122/97) protein is UDP-N-acetylglucosamine--N-acetylmuramyl-(pentapeptide) pyrophosphoryl-undecaprenol N-acetylglucosamine transferase.